A 544-amino-acid chain; its full sequence is Tyrosine-protein kinase Yes (544 aa).

A lipid anchor (N-myristoyl glycine) is attached at Gly2. An SH3 domain is found at 92–153 (GGVTFFVALY…PSNYVAPADS (62 aa)). An SH2 domain is found at 159–256 (WYFGKLSRKD…GLCYKLTTVC (98 aa)). Residues 278–531 (LRLDVRLGQG…YIQSFLEDYF (254 aa)) enclose the Protein kinase domain. Residues 284–292 (LGQGCFGEV) and Lys306 contribute to the ATP site. Asp397 functions as the Proton acceptor in the catalytic mechanism. Tyr427 is subject to Phosphotyrosine; by autocatalysis.

It belongs to the protein kinase superfamily. Tyr protein kinase family. SRC subfamily.

It carries out the reaction L-tyrosyl-[protein] + ATP = O-phospho-L-tyrosyl-[protein] + ADP + H(+). The protein is Tyrosine-protein kinase Yes (yes) of Xiphophorus hellerii (Green swordtail).